The sequence spans 122 residues: Large ribosomal subunit protein bL12 (122 aa).

Belongs to the bacterial ribosomal protein bL12 family. In terms of assembly, homodimer. Part of the ribosomal stalk of the 50S ribosomal subunit. Forms a multimeric L10(L12)X complex, where L10 forms an elongated spine to which 2 to 4 L12 dimers bind in a sequential fashion. Binds GTP-bound translation factors.

In terms of biological role, forms part of the ribosomal stalk which helps the ribosome interact with GTP-bound translation factors. Is thus essential for accurate translation. The sequence is that of Large ribosomal subunit protein bL12 from Deinococcus geothermalis (strain DSM 11300 / CIP 105573 / AG-3a).